We begin with the raw amino-acid sequence, 1308 residues long: MKLATGLWVWGSLLMAAGTVQPSASQSVCAGTENKLSSLSDLEQQYRALRKYYENCEVVMGNLEITSIEHNRDLSFLRSIREVTGYVLVALNQFRYLPLENLRIIRGTKLYEDRYALAIFLNYRKDGNFGLQELGLKNLTEILNGGVYVDQNKFLCYADTIHWQDIVRNPWPSNMTLVSTNGSSGCGRCHKSCTGRCWGPTENHCQTLTRTVCAEQCDGRCYGPYVSDCCHRECAGGCSGPKDTDCFACMNFNDSGACVTQCPQTFVYNPTTFQLEHNFNAKYTYGAFCVKKCPHNFVVDSSSCVRACPSSKMEVEENGIKMCKPCTDICPKACDGIGTGSLMSAQTVDSSNIDKFINCTKINGNLIFLVTGIHGDPYNAIDAIDPEKLNVFRTVREITGFLNIQSWPPNMTDFSVFSNLVTIGGRVLYSGLSLLILKQQGITSLQFQSLKEISAGNIYITDNSNLCYYHTINWTTLFSTINQRIVIRDNRRAENCTAEGMVCNHLCSNDGCWGPGPDQCLSCRRFSRGKICIESCNLYDGEFREFENGSICVECDSQCEKMEDGLLTCHGPGPDNCTKCSHFKDGPNCVEKCPDGLQGANSFIFKYADQDRECHPCHPNCTQGCNGPTSHDCIYYPWTGHSTLPQHARTPLIAAGVIGGLFILVIMALTFAVYVRRKSIKKKRALRRFLETELVEPLTPSGTAPNQAQLRILKETELKRVKVLGSGAFGTVYKGIWVPEGETVKIPVAIKILNETTGPKANVEFMDEALIMASMDHPHLVRLLGVCLSPTIQLVTQLMPHGCLLDYVHEHKDNIGSQLLLNWCVQIAKGMMYLEERRLVHRDLAARNVLVKSPNHVKITDFGLARLLEGDEKEYNADGGKMPIKWMALECIHYRKFTHQSDVWSYGVTIWELMTFGGKPYDGIPTREIPDLLEKGERLPQPPICTIDVYMVMVKCWMIDADSRPKFKELAAEFSRMARDPQRYLVIQGDDRMKLPSPNDSKFFQNLLDEEDLEDMMDAEEYLVPQAFNIPPPIYTSRTRIDSNRSEIGHSPPPAYTPMSGNQFVYQDGGFATQQGMPMPYRATTSTIPEAPVAQGATAEMFDDSCCNGTLRKPVAPHVQEDSSTQRYSADPTVFAPERNPRGELDEEGYMTPMHDKPKQEYLNPVEENPFVSRRKNGDLQALDNPEYHSASSGPPKAEDEYVNEPLYLNTFANALGSAEYMKNSVLSVPEKAKKAFDNPDYWNHSLPPRSTLQHPDYLQEYSTKYFYKQNGRIRPIVAENPEYLSEFSLKPGTMLPPPPYRHRNTVV.

A signal peptide spans 1 to 25 (MKLATGLWVWGSLLMAAGTVQPSAS). Topologically, residues 26 to 652 (QSVCAGTENK…TLPQHARTPL (627 aa)) are extracellular. Residues Cys-29 and Cys-56 are joined by a disulfide bond. N-linked (GlcNAc...) asparagine glycans are attached at residues Asn-138, Asn-174, and Asn-181. Intrachain disulfides connect Cys-156-Cys-186, Cys-189-Cys-197, Cys-193-Cys-205, Cys-213-Cys-221, Cys-217-Cys-229, Cys-230-Cys-238, Cys-234-Cys-246, Cys-249-Cys-258, Cys-262-Cys-289, Cys-293-Cys-304, Cys-308-Cys-323, and Cys-326-Cys-330. Asn-253 carries N-linked (GlcNAc...) asparagine glycosylation. Residues Asn-410, Asn-473, and Asn-495 are each glycosylated (N-linked (GlcNAc...) asparagine). 10 disulfide bridges follow: Cys-503-Cys-512, Cys-507-Cys-520, Cys-523-Cys-532, Cys-536-Cys-552, Cys-555-Cys-569, Cys-559-Cys-577, Cys-580-Cys-589, Cys-593-Cys-614, Cys-617-Cys-625, and Cys-621-Cys-633. Asn-548 carries an N-linked (GlcNAc...) asparagine glycan. A glycan (N-linked (GlcNAc...) asparagine) is linked at Asn-576. Asn-620 is a glycosylation site (N-linked (GlcNAc...) asparagine). Positions 653-673 (IAAGVIGGLFILVIMALTFAV) form a transmembrane segment. Over 674–1308 (YVRRKSIKKK…PPYRHRNTVV (635 aa)) the chain is Cytoplasmic. The short motif at 676 to 684 (RRKSIKKKR) is the Nuclear localization signal element. The region spanning 718 to 985 (LKRVKVLGSG…RMARDPQRYL (268 aa)) is the Protein kinase domain. ATP contacts are provided by residues 724-732 (LGSGAFGTV), Lys-751, 797-799 (QLM), and 843-848 (DLAARN). The active-site Proton acceptor is the Asp-843. Phosphotyrosine; by autocatalysis is present on residues Tyr-875, Tyr-1035, and Tyr-1056. The PPxy motif 1 signature appears at 1032-1035 (PPIY). Positions 1117-1149 (PHVQEDSSTQRYSADPTVFAPERNPRGELDEEG) are disordered. Residues Tyr-1150, Tyr-1162, Tyr-1188, Tyr-1202, Tyr-1242, Tyr-1258, and Tyr-1284 each carry the phosphotyrosine; by autocatalysis modification. Positions 1282–1285 (PEYL) match the PPxY motif 2 motif. A PDZ-binding motif is present at residues 1290–1292 (LKP).

The protein belongs to the protein kinase superfamily. Tyr protein kinase family. EGF receptor subfamily. In terms of assembly, monomer in the absence of bound ligand. Homodimer or heterodimer with another ERBB family member upon ligand binding, thus forming heterotetramers. Interacts with EGFR and ERBB2. Interacts with DLG2 (via its PDZ domain), DLG3 (via its PDZ domain), DLG4 (via its PDZ domain) and SNTB2 (via its PDZ domain). Interacts with MUC1. Interacts (via its PPxy motifs) with WWOX. Interacts (via the PPxY motif 3 of isoform JM-A CYT-2) with YAP1 (via the WW domain 1 of isoform 1). Interacts (isoform JM-A CYT-1 and isoform JM-B CYT-1) with WWP1. Interacts (via its intracellular domain) with TRIM28. Interacts (via the intracellular domains of both CYT-1 and CYT-2 isoforms) with KAP1; the interaction does not phosphorylate KAP1 but represses ERBB4-mediated transcriptional activity. Interacts with PRPU, DDX23, MATR3, RBM15, ILF3, KAP1, U5S1, U2SURP, ITCH, HNRNPU, AP2A1, NULC, LEO1, WWP2, IGHG1, HXK1, GRB7 and SRRT. Interacts (phosphorylated isoform JM-A CYT-1 and isoform JM-B CYT-1) with PIK3R1. Interacts with SHC1. Interacts with GRB2. Interacts (soluble intracellular domain) with BCL2. Interacts (phosphorylated) with STAT1. Interacts with CBFA2T3. Interacts (soluble intracellular domain) with STAT5A. Isoform JM-A CYT-1 and isoform JM-A CYT-2 are processed by ADAM17. Proteolytic processing in response to ligand or 12-O-tetradecanoylphorbol-13-acetate stimulation results in the production of 120 kDa soluble receptor forms and intermediate membrane-anchored 80 kDa fragments (m80HER4), which are further processed by a presenilin-dependent gamma-secretase to release a cytoplasmic intracellular domain (E4ICD; E4ICD1/s80Cyt1 or E4ICD2/s80Cyt2, depending on the isoform). Membrane-anchored 80 kDa fragments of the processed isoform JM-A CYT-1 are more readily degraded by the proteasome than fragments of isoform JM-A CYT-2, suggesting a prevalence of E4ICD2 over E4ICD1. Isoform JM-B CYT-1 and isoform JM-B CYT-2 lack the ADAM17 cleavage site and are not processed by ADAM17, precluding further processing by gamma-secretase. In terms of processing, autophosphorylated on tyrosine residues in response to ligand binding. Autophosphorylation occurs in trans, i.e. one subunit of the dimeric receptor phosphorylates tyrosine residues on the other subunit. Ligands trigger phosphorylation at specific tyrosine residues, thereby creating binding sites for scaffold proteins and effectors. Constitutively phosphorylated at a basal level when overexpressed in heterologous systems; ligand binding leads to increased phosphorylation. Phosphorylation at Tyr-1035 is important for interaction with STAT1. Phosphorylation at Tyr-1056 is important for interaction with PIK3R1. Phosphorylation at Tyr-1242 is important for interaction with SHC1. Phosphorylation at Tyr-1188 may also contribute to the interaction with SHC1. Isoform JM-A CYT-2 is constitutively phosphorylated on tyrosine residues in a ligand-independent manner. E4ICD2 but not E4ICD1 is phosphorylated on tyrosine residues. Post-translationally, ubiquitinated. During mitosis, the ERBB4 intracellular domain is ubiquitinated by the APC/C complex and targeted to proteasomal degradation. Isoform JM-A CYT-1 and isoform JM-B CYT-1 are ubiquitinated by WWP1. The ERBB4 intracellular domain (E4ICD1) is ubiquitinated, and this involves NEDD4. As to expression, isoform JM-A CYT-2 and isoform JM-B CYT-2 are expressed in cerebellum, cerebral cortex, spinal cord, medulla oblongata and eye, but the kidney expresses solely isoform JM-A CYT-2 and the heart solely isoform JM-B CYT-2.

Its subcellular location is the cell membrane. It localises to the nucleus. It is found in the mitochondrion. The enzyme catalyses L-tyrosyl-[protein] + ATP = O-phospho-L-tyrosyl-[protein] + ADP + H(+). Its activity is regulated as follows. Binding of a cognate ligand leads to dimerization and activation by autophosphorylation on tyrosine residues. In vitro kinase activity is increased by Mg(2+). Functionally, tyrosine-protein kinase that plays an essential role as cell surface receptor for neuregulins and EGF family members and regulates development of the heart, the central nervous system and the mammary gland, gene transcription, cell proliferation, differentiation, migration and apoptosis. Required for normal cardiac muscle differentiation during embryonic development, and for postnatal cardiomyocyte proliferation. Required for normal development of the embryonic central nervous system, especially for normal neural crest cell migration and normal axon guidance. Required for mammary gland differentiation, induction of milk proteins and lactation. Acts as cell-surface receptor for the neuregulins NRG1, NRG2, NRG3 and NRG4 and the EGF family members BTC, EREG and HBEGF. Ligand binding triggers receptor dimerization and autophosphorylation at specific tyrosine residues that then serve as binding sites for scaffold proteins and effectors. Ligand specificity and signaling is modulated by alternative splicing, proteolytic processing, and by the formation of heterodimers with other ERBB family members, thereby creating multiple combinations of intracellular phosphotyrosines that trigger ligand- and context-specific cellular responses. Mediates phosphorylation of SHC1 and activation of the MAP kinases MAPK1/ERK2 and MAPK3/ERK1. Isoform JM-A CYT-1 and isoform JM-B CYT-1 phosphorylate PIK3R1, leading to the activation of phosphatidylinositol 3-kinase and AKT1 and protect cells against apoptosis. Isoform JM-A CYT-1 and isoform JM-B CYT-1 mediate reorganization of the actin cytoskeleton and promote cell migration in response to NRG1. Isoform JM-A CYT-2 and isoform JM-B CYT-2 lack the phosphotyrosine that mediates interaction with PIK3R1, and hence do not phosphorylate PIK3R1, do not protect cells against apoptosis, and do not promote reorganization of the actin cytoskeleton and cell migration. Proteolytic processing of isoform JM-A CYT-1 and isoform JM-A CYT-2 gives rise to the corresponding soluble intracellular domains (4ICD) that translocate to the nucleus, promote nuclear import of STAT5A, activation of STAT5A, mammary epithelium differentiation, cell proliferation and activation of gene expression. The ERBB4 soluble intracellular domains (4ICD) colocalize with STAT5A at the CSN2 promoter to regulate transcription of milk proteins during lactation. The ERBB4 soluble intracellular domains can also translocate to mitochondria and promote apoptosis. This is Receptor tyrosine-protein kinase erbB-4 (Erbb4) from Mus musculus (Mouse).